A 67-amino-acid chain; its full sequence is Ranatuerin-2Vb (67 aa).

The first 22 residues, 1-22 (MFTLKKSFLLLFFLGTITLSLC), serve as a signal peptide directing secretion. Positions 23 to 39 (EEERGADDDDGEEEVKR) are excised as a propeptide. Residues Cys-62 and Cys-67 are joined by a disulfide bond.

As to expression, expressed by the skin glands.

The protein localises to the secreted. Antimicrobial peptide. The polypeptide is Ranatuerin-2Vb (Odorrana versabilis (Chinese bamboo leaf odorous frog)).